The chain runs to 510 residues: ATP synthase subunit alpha (510 aa).

169 to 176 (GDRQTGKT) serves as a coordination point for ATP.

This sequence belongs to the ATPase alpha/beta chains family. F-type ATPases have 2 components, CF(1) - the catalytic core - and CF(0) - the membrane proton channel. CF(1) has five subunits: alpha(3), beta(3), gamma(1), delta(1), epsilon(1). CF(0) has four main subunits: a(1), b(1), b'(1) and c(9-12).

Its subcellular location is the cell inner membrane. The enzyme catalyses ATP + H2O + 4 H(+)(in) = ADP + phosphate + 5 H(+)(out). Functionally, produces ATP from ADP in the presence of a proton gradient across the membrane. The alpha chain is a regulatory subunit. The protein is ATP synthase subunit alpha of Rhodopseudomonas palustris (strain HaA2).